A 192-amino-acid polypeptide reads, in one-letter code: MASKGPSASASPENSSAGGPSGSSNGAGESGGQDSTFECNICLDTAKDAVISLCGHLFCWPCLHQWLETRPNRQVCPVCKAGISRDKVIPLYGRGSTGQQDPREKTPPRPQGQRPEPENRGGFQGFGFGDGGFQMSFGIGAFPFGIFATAFNINDGRPPPAVPGTPQYVDEQFLSRLFLFVALVIMFWLLIA.

Over residues 1-27 the composition is skewed to low complexity; the sequence is MASKGPSASASPENSSAGGPSGSSNGA. Residues 1 to 30 are disordered; that stretch reads MASKGPSASASPENSSAGGPSGSSNGAGES. Topologically, residues 1–130 are cytoplasmic; sequence MASKGPSASA…GGFQGFGFGD (130 aa). Positions 29-80 are required for ubiquitin ligase activity and protection against ER stress-induced cell death; the sequence is ESGGQDSTFECNICLDTAKDAVISLCGHLFCWPCLHQWLETRPNRQVCPVCK. An RING-type zinc finger spans residues 39-80; that stretch reads CNICLDTAKDAVISLCGHLFCWPCLHQWLETRPNRQVCPVCK. The interval 90 to 123 is disordered; that stretch reads PLYGRGSTGQQDPREKTPPRPQGQRPEPENRGGF. A helical membrane pass occupies residues 131–151; that stretch reads GGFQMSFGIGAFPFGIFATAF. At 152–171 the chain is on the mitochondrial intermembrane side; that stretch reads NINDGRPPPAVPGTPQYVDE. A helical membrane pass occupies residues 172–192; that stretch reads QFLSRLFLFVALVIMFWLLIA.

Interacts with ATG5 and BNIP1. In terms of tissue distribution, ubiquitously expressed.

Its subcellular location is the mitochondrion outer membrane. It localises to the endoplasmic reticulum membrane. It carries out the reaction S-ubiquitinyl-[E2 ubiquitin-conjugating enzyme]-L-cysteine + [acceptor protein]-L-lysine = [E2 ubiquitin-conjugating enzyme]-L-cysteine + N(6)-ubiquitinyl-[acceptor protein]-L-lysine.. It functions in the pathway protein modification; protein ubiquitination. E3 ubiquitin-protein ligase that regulates selective mitochondrial autophagy by mediating 'Lys-63'-linked polyubiquitination of BNIP1. Acts in the endoplasmic reticulum (ER)-associated degradation (ERAD) pathway, which targets misfolded proteins that accumulate in the endoplasmic reticulum (ER) for ubiquitination and subsequent proteasome-mediated degradation. Protects cells from ER stress-induced apoptosis. Responsible for the cotranslational ubiquitination and degradation of CFTR in the ERAD pathway. Also acts as a regulator of the innate antiviral response by catalyzing 'Lys-27'-linked polyubiquitination of CGAS at 'Lys-173' and 'Lys-384', thereby promoting CGAS cyclic GMP-AMP synthase activity. Preferentially associates with the E2 enzymes UBE2J1 and UBE2J2. This is E3 ubiquitin-protein ligase RNF185 from Homo sapiens (Human).